A 344-amino-acid chain; its full sequence is Glyceraldehyde-3-phosphate dehydrogenase (344 aa).

NAD(+)-binding positions include 11–12 (TI) and glycine 110. D-glyceraldehyde 3-phosphate is bound at residue 139–141 (SCN). Cysteine 140 (nucleophile) is an active-site residue. Arginine 169 provides a ligand contact to NAD(+). Position 195–196 (195–196 (HG)) interacts with D-glyceraldehyde 3-phosphate. Glutamine 302 contacts NAD(+).

It belongs to the glyceraldehyde-3-phosphate dehydrogenase family. In terms of assembly, homotetramer.

The protein localises to the cytoplasm. The enzyme catalyses D-glyceraldehyde 3-phosphate + phosphate + NADP(+) = (2R)-3-phospho-glyceroyl phosphate + NADPH + H(+). It catalyses the reaction D-glyceraldehyde 3-phosphate + phosphate + NAD(+) = (2R)-3-phospho-glyceroyl phosphate + NADH + H(+). It functions in the pathway carbohydrate degradation; glycolysis; pyruvate from D-glyceraldehyde 3-phosphate: step 1/5. The sequence is that of Glyceraldehyde-3-phosphate dehydrogenase from Pyrobaculum neutrophilum (strain DSM 2338 / JCM 9278 / NBRC 100436 / V24Sta) (Thermoproteus neutrophilus).